Consider the following 597-residue polypeptide: uncharacterized protein (597 aa).

5 helical membrane passes run valine 37–valine 57, isoleucine 67–alanine 87, glycine 109–isoleucine 129, serine 134–tryptophan 154, and alanine 162–valine 182. The 205-residue stretch at histidine 393–serine 597 folds into the Histidine kinase domain.

It is found in the cell membrane. This is an uncharacterized protein from Chloroflexus aurantiacus (strain ATCC 29366 / DSM 635 / J-10-fl).